The sequence spans 698 residues: MHPSEMQRKAPPRRRRHRNRAPLTHKMNKMVTSEQMKLPSTKKAEPPTWAQLKKLTQLATKYLENTKVTQTPESMLLAALMIVSMVVSLPMPAGAAAANYTNWAYVPFPPLIRAVTWMDNPIEVYVNDSVWVHGPIDDRCPAKPEEEGMMINISIGYHYPPICLGRAPGCLMPAVQNWLVEVPTVSPISRFTYNMVSGMSLRPRVNYLQDFSYQRSLKFRPKGKPCPKEIPKESKNTEVLVWEECVANSVVILQNNEFGTIIDWAPRGQFYHNCSGQTQSCPSAQVSPAVDSDLTESLDKHKHKKLQSFYPWEWGEKGISTPRPKIISPVSGPEHPELWRLTVASHHIRIWSGNQTLETRDRKPFYTVDLNSSLTVPLQSCVKPPYMLVVGNIVIKPDSQTITCENCRLLTCIDSTFNWQHRILLVRAREGVWIPVSMDRPWEASPSIHILTEVLKGVLNRSKRFIFTLIAVIMGLIAVTAMAAVAGVALHSFVQSVNFVNDWQKNSTRLWNSQSSIDQKLANQINDLRQTVIWMGDRLMSLEHRFQLQCDWNTSDFCITPQIYNESEHHWDMVRRHLQGREDNLTLDISKLKEQIFEASKAHLNLVPGTEAIAGVADGLANLNPVTWVKTIGSTTIINLILILVCLFCLLLVCRCTQQLRRDSDHRERAMMTMVVLSKRKGGNVGKSKRDQIVTVSV.

The interval 1-25 is disordered; the sequence is MHPSEMQRKAPPRRRRHRNRAPLTH. An N-terminal signal peptide occupies residues 1–88; it reads MHPSEMQRKA…ALMIVSMVVS (88 aa). Basic residues predominate over residues 10 to 20; that stretch reads APPRRRRHRNR. Over 89 to 631 the chain is Extracellular; sequence LPMPAGAAAA…NLNPVTWVKT (543 aa). N-linked (GlcNAc...) asparagine glycans are attached at residues asparagine 99, asparagine 127, asparagine 152, asparagine 273, asparagine 354, asparagine 371, and asparagine 460. The fusion peptide stretch occupies residues 465-485; the sequence is FIFTLIAVIMGLIAVTAMAAV. N-linked (GlcNAc...) asparagine glycans are attached at residues asparagine 506, asparagine 553, asparagine 565, and asparagine 584. The chain crosses the membrane as a helical span at residues 632 to 652; the sequence is IGSTTIINLILILVCLFCLLL. Residues 653–698 lie on the Cytoplasmic side of the membrane; that stretch reads VCRCTQQLRRDSDHRERAMMTMVVLSKRKGGNVGKSKRDQIVTVSV.

The protein belongs to the beta type-B retroviral envelope protein family. HERV class-II K(HML-2) env subfamily. The surface (SU) and transmembrane (TM) proteins form a heterodimer. SU and TM are attached by noncovalent interactions or by a labile interchain disulfide bond. In terms of processing, specific enzymatic cleavages in vivo yield the mature SU and TM proteins.

The protein resides in the cell membrane. It is found in the virion. Retroviral envelope proteins mediate receptor recognition and membrane fusion during early infection. Endogenous envelope proteins may have kept, lost or modified their original function during evolution. This endogenous envelope protein has lost its original fusogenic properties. Functionally, SU mediates receptor recognition. In terms of biological role, TM anchors the envelope heterodimer to the viral membrane through one transmembrane domain. The other hydrophobic domain, called fusion peptide, mediates fusion of the viral membrane with the target cell membrane. The sequence is that of Endogenous retrovirus group K member 21 Env polyprotein (ERVK-21) from Homo sapiens (Human).